The chain runs to 287 residues: ATP synthase gamma chain (287 aa).

Belongs to the ATPase gamma chain family. As to quaternary structure, F-type ATPases have 2 components, CF(1) - the catalytic core - and CF(0) - the membrane proton channel. CF(1) has five subunits: alpha(3), beta(3), gamma(1), delta(1), epsilon(1). CF(0) has three main subunits: a, b and c.

It is found in the cell membrane. Produces ATP from ADP in the presence of a proton gradient across the membrane. The gamma chain is believed to be important in regulating ATPase activity and the flow of protons through the CF(0) complex. This Mycoplasmopsis agalactiae (strain NCTC 10123 / CIP 59.7 / PG2) (Mycoplasma agalactiae) protein is ATP synthase gamma chain.